Here is a 421-residue protein sequence, read N- to C-terminus: Trimethyllysine dioxygenase, mitochondrial (421 aa).

Residues M1–D15 constitute a mitochondrion transit peptide. Position 236 is an N6-acetyllysine (K236). Residues H242, D244, and H389 each contribute to the Fe cation site.

It belongs to the gamma-BBH/TMLD family. In terms of assembly, homodimer. The cofactor is Fe(2+). L-ascorbate serves as cofactor.

It localises to the mitochondrion matrix. The catalysed reaction is N(6),N(6),N(6)-trimethyl-L-lysine + 2-oxoglutarate + O2 = (3S)-3-hydroxy-N(6),N(6),N(6)-trimethyl-L-lysine + succinate + CO2. It participates in amine and polyamine biosynthesis; carnitine biosynthesis. In terms of biological role, converts trimethyllysine (TML) into hydroxytrimethyllysine (HTML). The protein is Trimethyllysine dioxygenase, mitochondrial (TMLHE) of Bos taurus (Bovine).